Here is a 297-residue protein sequence, read N- to C-terminus: Acetyl-coenzyme A carboxylase carboxyl transferase subunit beta (297 aa).

Residues 27–296 (LWHKCPACEA…PEQAREAAAV (270 aa)) enclose the CoA carboxyltransferase N-terminal domain. Residues cysteine 31, cysteine 34, cysteine 50, and cysteine 53 each contribute to the Zn(2+) site. Residues 31–53 (CPACEAVLYRPELEKTLDVCPKC) form a C4-type zinc finger.

This sequence belongs to the AccD/PCCB family. Acetyl-CoA carboxylase is a heterohexamer composed of biotin carboxyl carrier protein (AccB), biotin carboxylase (AccC) and two subunits each of ACCase subunit alpha (AccA) and ACCase subunit beta (AccD). It depends on Zn(2+) as a cofactor.

It is found in the cytoplasm. The catalysed reaction is N(6)-carboxybiotinyl-L-lysyl-[protein] + acetyl-CoA = N(6)-biotinyl-L-lysyl-[protein] + malonyl-CoA. The protein operates within lipid metabolism; malonyl-CoA biosynthesis; malonyl-CoA from acetyl-CoA: step 1/1. Component of the acetyl coenzyme A carboxylase (ACC) complex. Biotin carboxylase (BC) catalyzes the carboxylation of biotin on its carrier protein (BCCP) and then the CO(2) group is transferred by the transcarboxylase to acetyl-CoA to form malonyl-CoA. In Pseudomonas putida (strain W619), this protein is Acetyl-coenzyme A carboxylase carboxyl transferase subunit beta.